The primary structure comprises 134 residues: Small ribosomal subunit protein uS12 (134 aa).

Position 89 is a 3-methylthioaspartic acid (aspartate 89). The interval 103-134 is disordered; the sequence is DTAGVKDRKQGRSKYGAKRPKPGEAAATGKKK. Residues 113 to 122 show a composition bias toward basic residues; sequence GRSKYGAKRP.

Belongs to the universal ribosomal protein uS12 family. Part of the 30S ribosomal subunit. Contacts proteins S8 and S17. May interact with IF1 in the 30S initiation complex.

With S4 and S5 plays an important role in translational accuracy. Functionally, interacts with and stabilizes bases of the 16S rRNA that are involved in tRNA selection in the A site and with the mRNA backbone. Located at the interface of the 30S and 50S subunits, it traverses the body of the 30S subunit contacting proteins on the other side and probably holding the rRNA structure together. The combined cluster of proteins S8, S12 and S17 appears to hold together the shoulder and platform of the 30S subunit. This chain is Small ribosomal subunit protein uS12, found in Thermosynechococcus vestitus (strain NIES-2133 / IAM M-273 / BP-1).